Here is a 122-residue protein sequence, read N- to C-terminus: Large ribosomal subunit protein uL14 (122 aa).

The protein belongs to the universal ribosomal protein uL14 family. Part of the 50S ribosomal subunit. Forms a cluster with proteins L3 and L19. In the 70S ribosome, L14 and L19 interact and together make contacts with the 16S rRNA in bridges B5 and B8.

In terms of biological role, binds to 23S rRNA. Forms part of two intersubunit bridges in the 70S ribosome. The polypeptide is Large ribosomal subunit protein uL14 (Novosphingobium aromaticivorans (strain ATCC 700278 / DSM 12444 / CCUG 56034 / CIP 105152 / NBRC 16084 / F199)).